The sequence spans 207 residues: Intraflagellar transport protein 43 homolog A (207 aa).

The segment at 1-104 (MDDNLQLGDS…GSDDEGDIPV (104 aa)) is disordered.

It belongs to the IFT43 family. Component of IFT complex A.

Its function is as follows. Component of IFT complex A (IFT-A) involved in retrograde ciliary transport along microtubules from the ciliary tip to the base. This is Intraflagellar transport protein 43 homolog A (ift43a) from Salmo salar (Atlantic salmon).